Reading from the N-terminus, the 1288-residue chain is Disease resistance protein RRS1 (1288 aa).

Positions 5 to 146 (EKDEEFVCIS…EIVRDVYETH (142 aa)) constitute a TIR domain. An important for interaction with RPS4 region spans residues 25–26 (SH). An NB-ARC domain is found at 170-421 (IGIRCVGIWG…LLEGCGFFPH (252 aa)). 179–186 (GMPGIGKT) serves as a coordination point for ATP. LRR repeat units lie at residues 498–522 (SEEIEGLFLDTSNLRFDLQPSAFKN), 535–553 (NPEVHPVINFPTGSLHSLP), 554–575 (NELRLLHWENYPLKSLPQNFDP), 577–598 (HLVEINMPYSQLQKLWGGTKNL), 621–646 (AENLEVIDLQGCTRLQNFPAAGRLLR), 665–688 (PPNIEKLHLQGTGILALPVSTVKP), 697–720 (LTEIPGLSEELERLTSLLESNSSC), 740–764 (LPNMANLDLNVLDLSGCSSLNSIQG), 766–791 (PRFLKQLYLGGTAIREVPQLPQSLEI), 792–807 (LNAHGSCLRSLPNMAN), 808–829 (LEFLKVLDLSGCSELETIQGFP), and 830–852 (RNLKELYFAGTTLREVPQLPLSL). The Nuclear localization signal motif lies at 986–1003 (RKFHCWAPWQVVPKVRKD). A DNA-binding region (WRKY) is located at residues 1202-1270 (IPAIDEGDLW…YLSEHNHPRP (69 aa)). Residues 1267–1288 (HPRPTKRKALADSTRSTSSSIC) are disordered. The segment covering 1279-1288 (STRSTSSSIC) has biased composition (polar residues).

Belongs to the disease resistance TIR-NB-LRR family. As to quaternary structure, interacts with PopP2, a R.solanacearum type III effector. Interacts with RPS4.

It localises to the nucleus. The protein resides in the cytoplasm. Its function is as follows. Transcription factor. Interacts specifically with the W box (5'-(T)TGAC[CT]-3'), a frequently occurring elicitor-responsive cis-acting element. Also acts as a disease resistance protein involved in resistance to fungal and bacterial pathogens, including R.solanacearum, P.syringae pv. tomato and C.higginsianum. Heterodimerization with RPS4 is required to form a functional complex to recognize AvrRps4 and PopP2. Contributes to temperature-conditioned RPS4 auto-immunity. This is Disease resistance protein RRS1 from Arabidopsis thaliana (Mouse-ear cress).